Here is a 381-residue protein sequence, read N- to C-terminus: Carboxylesterase 5A (381 aa).

The active-site Acyl-ester intermediate is Ser-108. Cys-162 and Cys-173 are oxidised to a cystine. Asn-163 carries an N-linked (GlcNAc...) asparagine glycan. Glu-227 (charge relay system) is an active-site residue. A glycan (N-linked (GlcNAc...) asparagine) is linked at Asn-245. His-336 serves as the catalytic Charge relay system.

The protein belongs to the type-B carboxylesterase/lipase family. As to quaternary structure, component of a epididymal complex at least composed of soluble form of prion protein PRNP, CLU, BPI, CES5A, MANBA and GLB1. In terms of processing, N-glycosylated. In terms of tissue distribution, detected in corpus and cauda epididymal fluid. Present in seminal fluid but not found to be associated with sperm (at protein level). Not expressed in other tissues.

The protein resides in the secreted. The enzyme catalyses a carboxylic ester + H2O = an alcohol + a carboxylate + H(+). In terms of biological role, involved in the detoxification of xenobiotics and in the activation of ester and amide prodrugs. The protein is Carboxylesterase 5A (CES5A) of Ovis aries (Sheep).